The primary structure comprises 420 residues: Gamma-glutamyl phosphate reductase (420 aa).

This sequence belongs to the gamma-glutamyl phosphate reductase family.

Its subcellular location is the cytoplasm. It catalyses the reaction L-glutamate 5-semialdehyde + phosphate + NADP(+) = L-glutamyl 5-phosphate + NADPH + H(+). It participates in amino-acid biosynthesis; L-proline biosynthesis; L-glutamate 5-semialdehyde from L-glutamate: step 2/2. Its function is as follows. Catalyzes the NADPH-dependent reduction of L-glutamate 5-phosphate into L-glutamate 5-semialdehyde and phosphate. The product spontaneously undergoes cyclization to form 1-pyrroline-5-carboxylate. The sequence is that of Gamma-glutamyl phosphate reductase from Neisseria meningitidis serogroup C / serotype 2a (strain ATCC 700532 / DSM 15464 / FAM18).